Here is a 720-residue protein sequence, read N- to C-terminus: Glutaryl-7-aminocephalosporanic-acid acylase (720 aa).

Residues 1-29 form the signal peptide; that stretch reads MLRVLHRAASALVMATVIGLAPGVAFALA. The propeptide at 188 to 198 is spacer peptide; that stretch reads EGDPPDLADQG. The active-site Nucleophile is the Ser-199. Catalysis depends on residues His-221 and Glu-653.

This sequence belongs to the peptidase S45 family. Heterodimer of a small subunit and a large subunit processed from the same precursor.

The protein resides in the periplasm. The enzyme catalyses (7R)-7-(4-carboxybutanamido)cephalosporanate + H2O = (7R)-7-aminocephalosporanate + glutarate. Catalyzes the deacylation of 7 beta-(4-carboxybutanamido)cephalosporanic acid (glutaryl-7-aminocephalosporanic acid or GL-7-ACA) to 7-aminocephalosporanic acid (7-ACA). Cannot efficiently use cephalosporin C (CPC), penicillin G, or ampicillin as substrates. The sequence is that of Glutaryl-7-aminocephalosporanic-acid acylase from Brevundimonas diminuta (Pseudomonas diminuta).